Consider the following 64-residue polypeptide: MQKDSEKVTYMFSNLIGFLETAIIEGTASQEENTLYEDYKLFGTIDKKSYTYKNLVHKYLKSDY.

The sequence is that of SPbeta prophage-derived uncharacterized protein YonP (yonP) from Bacillus subtilis (strain 168).